The chain runs to 345 residues: Alpha-N-acetylneuraminide alpha-2,8-sialyltransferase (345 aa).

At 1–15 (MKLQGSRMWLCPRTR) the chain is on the cytoplasmic side. The helical; Signal-anchor for type II membrane protein transmembrane segment at 16–36 (LPVGASALGFLILCWLYVFPG) threads the bilayer. The Lumenal portion of the chain corresponds to 37 to 345 (YRLPGHKEMV…KKDVSSQKPH (309 aa)). 2 N-linked (GlcNAc...) asparagine glycosylation sites follow: Asn-59 and Asn-107. 2 disulfide bridges follow: Cys-126–Cys-275 and Cys-140–Cys-335. CMP-N-acetyl-beta-neuraminate is bound by residues Asn-131 and Asn-154. Residues Asn-154 and 176 to 178 (NPS) each bind substrate. An N-linked (GlcNAc...) asparagine glycan is attached at Asn-233. Residues Ser-262, Thr-263, Gly-264, Trp-284, and His-298 each coordinate CMP-N-acetyl-beta-neuraminate. Residue 262–264 (STG) coordinates substrate. His-310 (proton donor/acceptor) is an active-site residue.

The protein belongs to the glycosyltransferase 29 family.

It is found in the golgi apparatus membrane. The catalysed reaction is an N-acetyl-alpha-neuraminyl-(2-&gt;3)-beta-D-galactosyl derivative + CMP-N-acetyl-beta-neuraminate = an N-acetyl-alpha-neuraminyl-(2-&gt;8)-N-acetyl-alpha-neuraminyl-(2-&gt;3)-beta-D-galactosyl derivative + CMP + H(+). The enzyme catalyses a ganglioside GM3 (d18:1(4E)) + CMP-N-acetyl-beta-neuraminate = a ganglioside GD3 (d18:1(4E)) + CMP + H(+). It catalyses the reaction a ganglioside GD3 (d18:1(4E)) + CMP-N-acetyl-beta-neuraminate = a ganglioside GT3 (d18:1(4E)) + CMP + H(+). It carries out the reaction a ganglioside GD1a (d18:1(4E)) + CMP-N-acetyl-beta-neuraminate = a ganglioside GT1a (d18:1(4E)) + CMP + H(+). The catalysed reaction is a ganglioside GT1b (d18:1(4E)) + CMP-N-acetyl-beta-neuraminate = a ganglioside GQ1b (d18:1(4E)) + CMP + H(+). The enzyme catalyses a ganglioside GM1b (d18:1(4E)) + CMP-N-acetyl-beta-neuraminate = a ganglioside GD1c (d18:1(4E)) + CMP + H(+). It catalyses the reaction a ganglioside GD3 + CMP-N-acetyl-beta-neuraminate = a ganglioside GT3 + CMP + H(+). It carries out the reaction [alpha-N-acetylneuraminyl-(2-&gt;8)](n)-alpha-N-acetylneuraminyl-(2-&gt;8)-alpha-N-acetylneuraminyl-(2-&gt;3)-beta-D-galactosyl-(1-&gt;4)-beta-D-glucosyl-(1&lt;-&gt;1)-ceramide + CMP-N-acetyl-beta-neuraminate = [alpha-N-acetylneuraminyl-(2-&gt;8)](n+1)-alpha-N-acetylneuraminyl-(2-&gt;8)-alpha-N-acetylneuraminyl-(2-&gt;3)-beta-D-galactosyl-(1-&gt;4)-beta-D-glucosyl-(1&lt;-&gt;1)-ceramide + CMP + H(+). Its pathway is protein modification; protein glycosylation. It functions in the pathway lipid metabolism; sphingolipid metabolism. Catalyzes the addition of sialic acid in alpha 2,8-linkage to the sialic acid moiety of the ganglioside GM3 to form ganglioside GD3; gangliosides are a subfamily of complex glycosphingolipds that contain one or more residues of sialic acid. Glycosphingolipids are required for convergence extension movements during early development. Can catalyze the addition of a second alpha-2,8- sialic acid to GD3 to form GT3. Can use GM1b, GD1a and GT1b as acceptor substrates to synthesize GD1c, GT1a and GQ1b respectively. The sequence is that of Alpha-N-acetylneuraminide alpha-2,8-sialyltransferase from Xenopus tropicalis (Western clawed frog).